The chain runs to 405 residues: Bifunctional enzyme IspD/IspF (405 aa).

The segment at 1–240 (MTLADKPVLS…KLLLDEPKYR (240 aa)) is 2-C-methyl-D-erythritol 4-phosphate cytidylyltransferase. A 2-C-methyl-D-erythritol 2,4-cyclodiphosphate synthase region spans residues 240 to 405 (RVGTGYDIHR…LLYKIAPLHN (166 aa)). The a divalent metal cation site is built by Asp246 and His248. 4-CDP-2-C-methyl-D-erythritol 2-phosphate is bound by residues 246–248 (DIH) and 277–278 (HS). Residue His285 coordinates a divalent metal cation. Residues 299-301 (DIG), 375-378 (TTTE), and Arg385 each bind 4-CDP-2-C-methyl-D-erythritol 2-phosphate.

This sequence in the N-terminal section; belongs to the IspD/TarI cytidylyltransferase family. IspD subfamily. It in the C-terminal section; belongs to the IspF family. It depends on a divalent metal cation as a cofactor.

It carries out the reaction 2-C-methyl-D-erythritol 4-phosphate + CTP + H(+) = 4-CDP-2-C-methyl-D-erythritol + diphosphate. The enzyme catalyses 4-CDP-2-C-methyl-D-erythritol 2-phosphate = 2-C-methyl-D-erythritol 2,4-cyclic diphosphate + CMP. It functions in the pathway isoprenoid biosynthesis; isopentenyl diphosphate biosynthesis via DXP pathway; isopentenyl diphosphate from 1-deoxy-D-xylulose 5-phosphate: step 2/6. The protein operates within isoprenoid biosynthesis; isopentenyl diphosphate biosynthesis via DXP pathway; isopentenyl diphosphate from 1-deoxy-D-xylulose 5-phosphate: step 4/6. Bifunctional enzyme that catalyzes the formation of 4-diphosphocytidyl-2-C-methyl-D-erythritol from CTP and 2-C-methyl-D-erythritol 4-phosphate (MEP) (IspD), and catalyzes the conversion of 4-diphosphocytidyl-2-C-methyl-D-erythritol 2-phosphate (CDP-ME2P) to 2-C-methyl-D-erythritol 2,4-cyclodiphosphate (ME-CPP) with a corresponding release of cytidine 5-monophosphate (CMP) (IspF). The polypeptide is Bifunctional enzyme IspD/IspF (Wolbachia sp. subsp. Brugia malayi (strain TRS)).